Here is a 348-residue protein sequence, read N- to C-terminus: GDSL esterase/lipase At4g30140 (348 aa).

The signal sequence occupies residues 1–28 (MVEGESKALWIILATVFAVAAVAPAVHG). The active-site Nucleophile is serine 40. Catalysis depends on residues aspartate 316 and histidine 319. The N-linked (GlcNAc...) asparagine glycan is linked to asparagine 342.

The protein belongs to the 'GDSL' lipolytic enzyme family.

It localises to the secreted. The sequence is that of GDSL esterase/lipase At4g30140 from Arabidopsis thaliana (Mouse-ear cress).